We begin with the raw amino-acid sequence, 1574 residues long: MSFEVGTRCWYPHKELGWIGAEVIKNEFNDGKYHLELQLEDDEIVSVDTKDLNNDKDQSLPLLRNPPILEATEDLTSLSYLNEPAVLHAIKQRYSQLNIYTYSGIVLIATNPFDRVDQLYTQDMIQAYAGKRRGELEPHLFAIAEEAYRLMKNDKQNQTIVVSGESGAGKTVSAKYIMRYFASVEEENSATVQHQVEMSETEQKILATNPIMEAFGNAKTTRNDNSSRFGKYLEILFDKDTSIIGARIRTYLLERSRLVYQPPIERNYHIFYQLMAGLPAQTKEELHLTDASDYFYMNQGGDTKINGIDDAKEYKITVDALTLVGITKETQHQIFKILAALLHIGNIEIKKTRNDASLSADEPNLKLACELLGIDAYNFAKWVTKKQIITRSEKIVSNLNYSQALVAKDSVAKFIYSALFDWLVENINTVLCNPAVNDQISSFIGVLDIYGFEHFEKNSFEQFCINYANEKLQQEFNQHVFKLEQEEYVKEEIEWSFIEFNDNQPCIDLIENKLGILSLLDEESRLPAGSDESWTQKLYQTLDKSPTNKVFSKPRFGQTKFIVSHYALDVAYDVEGFIEKNRDTVSDGHLEVLKASTNETLINILEGLEKAAKKLEEAKKLELEQAGSKKPGPIRTVNRKPTLGSMFKQSLIELMNTINSTNVHYIRCIKPNADKEAWQFDNLMVLSQLRACGVLETIRISCAGFPSRWTFEEFVLRYYILIPHEQWDLIFKKKETTEEDIISVVKMILDATVKDKSKYQIGNTKIFFKAGMLAYLEKLRSNKMHNSIVMIQKKIRAKYYRKQYLQISQAIKYLQNNIKGFIIRQRVNDEMKVNCATLLQAAYRGHSIRANVFSVLRTITNLQKKIRKELKQRQLKQEHEYNAAVTIQSKVRTFEPRSRFLRTKKDTVVVQSLIRRRAAQRKLKQLKADAKSVNHLKEVSYKLENKVIELTQNLASKVKENKEMTERIKELQVQVEESAKLQETLENMKKEHLIDIDNQKSKDMELQKTIENNLQSTEQTLKDAQLELEDMVKQHDELKEESKKQLEELEQTKKTLVEYQTLNGDLQNEVKSLKEEIARLQTAMSLGTVTTSVLPQTPLKDVMGGGASNFNNMMLENSDLSPNDLNLKSRSTPSSGNNHIDSLSVDRENGVNATQINEELYRLLEDTEILNQEITEGLLKGFEVPDAGVAIQLSKRDVVYPARILIIVLSEMWRFGLTKQSESFLAQVLTTIQKVVTQLKGNDLIPSGVFWLANVRELYSFVVFALNSILTEETFKNGMTDEEYKEYVSLVTELKDDFEALSYNIYNIWLKKLQKQLQKKAINAVVISESLPGFSAGETSGFLNKIFANTEEYTMDDILTFFNSIYWCMKSFHIENEVFHAVVTTLLNYVDAICFNELIMKRNFLSWKRGLQLNYNVTRLEEWCKTHGLTDGTECLQHLIQTAKLLQVRKYTIEDIDILRGICYSLTPAQLQKLISQYQVADYESPIPQEILRYVADIVKKEAALSSSGNDSKGHEHSSSIFITPETGPFTDPFSLIKTRKFDQVEAYIPAWLSLPSTKRIVDLVAQQVVQDGH.

At S2 the chain carries N-acetylserine. Residues 4–57 (EVGTRCWYPHKELGWIGAEVIKNEFNDGKYHLELQLEDDEIVSVDTKDLNNDKD) enclose the Myosin N-terminal SH3-like domain. The 712-residue stretch at 70–781 (EATEDLTSLS…MLAYLEKLRS (712 aa)) folds into the Myosin motor domain. 164–171 (GESGAGKT) serves as a coordination point for ATP. Residues 443-523 (FIGVLDIYGF…LGILSLLDEE (81 aa)) form an actin-binding region. IQ domains follow at residues 784 to 806 (MHNS…QYLQ), 807 to 831 (ISQA…NDEM), 832 to 855 (KVNC…VFSV), 856 to 879 (LRTI…KQEH), 880 to 902 (EYNA…RFLR), and 903 to 932 (TKKD…DAKS). Residues 933–1088 (VNHLKEVSYK…RLQTAMSLGT (156 aa)) adopt a coiled-coil conformation. Residues 1087-1574 (GTVTTSVLPQ…VAQQVVQDGH (488 aa)) form a non alpha-helical, tail domain region. Residue T1097 is modified to Phosphothreonine. Position 1121 is a phosphoserine (S1121). Residues 1226–1501 (AQVLTTIQKV…LRYVADIVKK (276 aa)) enclose the Dilute domain.

The protein belongs to the TRAFAC class myosin-kinesin ATPase superfamily. Myosin family. In terms of assembly, homodimer. Interacts with calmodulin (CMD1) and the myosin light chain MLC1 through its IQ repeats. Binds to the membrane receptors SEC4 and VAC17 to transport secretory vesicles and the vacuole, respectively. Binds to KAR9, which transports BIM1-coated cytoplasmic microtubules that are attached to the spindle pole body into the emerging bud, thereby correctly orienting the mitotic spindle. Interacts with YPT11 and MMR1 to accelerate mitochondrial distribution to the bud. Interacts with SHE4 and localizes it to the bud tip. Interacts with RHO3 and SMY1, putative regulators of MYO2 function. Interacts with SRO7.

The protein localises to the bud neck. It localises to the bud tip. Myosin heavy chain that is required for the cell cycle-regulated transport of various organelles and proteins for their segregation. Functions by binding with its tail domain to receptor proteins on organelles and exerting force with its N-terminal motor domain against actin filaments, thereby transporting its cargo along polarized actin cables. Essential for the delivery of secretory vesicles to sites of active growth during bud emergence and cytokinesis. Required for segregation and inheritance of peroxisomes, late Golgi compartments, mitochondria and the vacuole to the daughter cell during cell division. Also required for correct alignment of the spindle during mitosis. The chain is Myosin-2 (MYO2) from Saccharomyces cerevisiae (strain ATCC 204508 / S288c) (Baker's yeast).